A 121-amino-acid chain; its full sequence is Large ribosomal subunit protein bL12 (121 aa).

It belongs to the bacterial ribosomal protein bL12 family. As to quaternary structure, homodimer. Part of the ribosomal stalk of the 50S ribosomal subunit. Forms a multimeric L10(L12)X complex, where L10 forms an elongated spine to which 2 to 4 L12 dimers bind in a sequential fashion. Binds GTP-bound translation factors.

Functionally, forms part of the ribosomal stalk which helps the ribosome interact with GTP-bound translation factors. Is thus essential for accurate translation. This Aeromonas hydrophila subsp. hydrophila (strain ATCC 7966 / DSM 30187 / BCRC 13018 / CCUG 14551 / JCM 1027 / KCTC 2358 / NCIMB 9240 / NCTC 8049) protein is Large ribosomal subunit protein bL12.